The primary structure comprises 135 residues: Histone H2B.4 (135 aa).

Basic and acidic residues-rich tracts occupy residues 1 to 12 and 23 to 35; these read MAPKAAEKKPVE and EKKV…GGEK. Residues 1-43 are disordered; it reads MAPKAAEKKPVEKTPAVKKPKAEKKVPTSKEGGEKKGKKKSKK. Residues lysine 8 and lysine 24 each carry the N6-acetyllysine modification. Lysine 131 participates in a covalent cross-link: Glycyl lysine isopeptide (Lys-Gly) (interchain with G-Cter in ubiquitin).

It belongs to the histone H2B family. In terms of assembly, the nucleosome is a histone octamer containing two molecules each of H2A, H2B, H3 and H4 assembled in one H3-H4 heterotetramer and two H2A-H2B heterodimers. The octamer wraps approximately 147 bp of DNA. Can be acetylated to form H2BK6ac and H2BK33ac. Post-translationally, monoubiquitinated to form H2BK143ub1; may give a specific tag for epigenetic transcriptional activation. Expressed preferentially in meristematic tissues.

The protein resides in the nucleus. It localises to the chromosome. In terms of biological role, core component of nucleosome. Nucleosomes wrap and compact DNA into chromatin, limiting DNA accessibility to the cellular machineries which require DNA as a template. Histones thereby play a central role in transcription regulation, DNA repair, DNA replication and chromosomal stability. DNA accessibility is regulated via a complex set of post-translational modifications of histones, also called histone code, and nucleosome remodeling. This Triticum aestivum (Wheat) protein is Histone H2B.4 (TH153).